A 395-amino-acid polypeptide reads, in one-letter code: GPI-anchor transamidase (395 aa).

An N-terminal signal peptide occupies residues 1 to 27 (MAVTDSLSRAATVLATVLLLSFGSVAA). Residues 28–368 (SHIEDQAEQF…PKLKDWHPPG (341 aa)) lie on the Lumenal side of the membrane. 4 residues coordinate Ca(2+): Asp-79, Ile-82, Glu-118, and Asp-120. The Proton donor role is filled by His-164. The Nucleophile; acyl-thioester intermediate role is filled by Cys-206. A protein-binding residues include Cys-206, Ser-232, and Ser-234. The autoinhibitory loop stretch occupies residues 231–236 (DSLSHQ). Residues Cys-275 and Cys-280 are joined by a disulfide bond. The chain crosses the membrane as a helical span at residues 369-385 (GFILGLWALIIMVFFKT). At 386 to 395 (YGIKHMKFIF) the chain is on the cytoplasmic side.

Belongs to the peptidase C13 family. In terms of assembly, heteropentamer. Part of the GPI-anchor transamidase complex, consisting of PIGK, PIGT, PIGS, PIGU and GAA1. Interacts with GPAA1. Interacts with PIGT; this interaction, via a disulfide link, stabilizes the expression of GAA1 and PIGK and links them to PIGS. In terms of processing, the disulfide bond between PIGK/GPI8 and PIGT is important for normal enzyme activity.

Its subcellular location is the endoplasmic reticulum membrane. It functions in the pathway glycolipid biosynthesis; glycosylphosphatidylinositol-anchor biosynthesis. In the absence of proproteins substrates, exists in an inactive state with a disrupted catalytic site by an autoinhibitory loop. The binding of proprotein substrates, particularly the CSP region, to GPI-T triggers concerted conformational changes that alleviate the inhibition by the autoinhibitory loop. Meanwhile, proprotein residues near the omega- site induce the formation of a catalytic cleft for catalysis, following which the products are released and GPI-T reverts to the inactive state. Its function is as follows. Catalytic subunit of the glycosylphosphatidylinositol-anchor (GPI-anchor) transamidase (GPI-T) complex that catalyzes the formation of the linkage between a proprotein and a GPI-anchor and participates in GPI anchored protein biosynthesis. Recognizes diverse proproteins at a C-terminal signal peptide (CSP) region that lacks consensus sequence and replaces it with a GPI-anchor via a transamidation reaction. Transamidation catalysis reaction follows a two-phase mechanism. In the acyl-enzyme phase, the carbonyl group of the proproteins's omega-site undergoes a nucleophilic attack forming an enzyme-substrate thioester bond. Followed by a general acid catalysis that allows CSP releasing, regenerating the carbonyl, and forming the acyl-enzyme intermediate. In the GPI-anchor attachment phase, the amino group of the GPI-anchor's ethanolamine phosphate, the one on third mannose (EtNP3), mediates a nucleophilic attack on the carbonyl of the acyl-enzyme intermediate, replacing the CSP, allowing GPI-anchor attachment to the omega-residue, therefore forming the product and freeing the enzyme. This Homo sapiens (Human) protein is GPI-anchor transamidase.